The sequence spans 434 residues: Glycylpeptide N-tetradecanoyltransferase 1 (434 aa).

The disordered stretch occupies residues 1 to 24; it reads MADNNSPPGSVEQKADQIVEANPL. Ala-2 is modified (N-acetylalanine). Tetradecanoyl-CoA contacts are provided by residues 48 to 51, 184 to 186, and 192 to 196; these read HKFW, LCV, and SKRLA. Leu-434 acts as the Proton acceptor; via carboxylate in catalysis.

Belongs to the NMT family. As to expression, expressed ubiquitously, with higher levels in young tissues (at protein level).

Its subcellular location is the cytoplasm. It catalyses the reaction N-terminal glycyl-[protein] + tetradecanoyl-CoA = N-tetradecanoylglycyl-[protein] + CoA + H(+). Functionally, adds a myristoyl group to the N-terminal glycine residue of certain cellular proteins. Can also use decanoyl-CoA and lauroyl-CoA as substrates. The chain is Glycylpeptide N-tetradecanoyltransferase 1 (NMT1) from Arabidopsis thaliana (Mouse-ear cress).